The following is a 283-amino-acid chain: Thymidylate synthase (283 aa).

R22 serves as a coordination point for dUMP. C160 serves as the catalytic Nucleophile. Residues 180–183, N191, and 221–223 contribute to the dUMP site; these read RSCD and HIY. D183 is a (6R)-5,10-methylene-5,6,7,8-tetrahydrofolate binding site. A (6R)-5,10-methylene-5,6,7,8-tetrahydrofolate-binding site is contributed by S282.

Belongs to the thymidylate synthase family. Bacterial-type ThyA subfamily. In terms of assembly, homodimer.

It localises to the cytoplasm. It catalyses the reaction dUMP + (6R)-5,10-methylene-5,6,7,8-tetrahydrofolate = 7,8-dihydrofolate + dTMP. It participates in pyrimidine metabolism; dTTP biosynthesis. In terms of biological role, catalyzes the reductive methylation of 2'-deoxyuridine-5'-monophosphate (dUMP) to 2'-deoxythymidine-5'-monophosphate (dTMP) while utilizing 5,10-methylenetetrahydrofolate (mTHF) as the methyl donor and reductant in the reaction, yielding dihydrofolate (DHF) as a by-product. This enzymatic reaction provides an intracellular de novo source of dTMP, an essential precursor for DNA biosynthesis. This Actinobacillus succinogenes (strain ATCC 55618 / DSM 22257 / CCUG 43843 / 130Z) protein is Thymidylate synthase.